The primary structure comprises 484 residues: Signal transduction histidine-protein kinase/phosphatase MprB (484 aa).

Over residues 1-10 (MAADNAGRWP) the composition is skewed to low complexity. Positions 1-23 (MAADNAGRWPGQPPGPPAPTHPA) are disordered. At 1–31 (MAADNAGRWPGQPPGPPAPTHPASSVSLRWR) the chain is on the cytoplasmic side. A compositionally biased stretch (pro residues) spans 11-20 (GQPPGPPAPT). A helical membrane pass occupies residues 32–52 (VMLLAMSMVVISVVLMAVAVF). Residues 53-172 (AVTSRALYDD…TGKVLKRLGT (120 aa)) are Extracellular-facing. The chain crosses the membrane as a helical span at residues 173–193 (VLLIVGGLGVAVAAIAGGMVA). The 53-residue stretch at 194 to 246 (SAGLRPVGRLTQAAERVARTDDLRPIPVIGNDELARLTETFNMMLRALAESRE) folds into the HAMP domain. The Cytoplasmic segment spans residues 194–484 (SAGLRPVGRL…SPAGSDEAER (291 aa)). A Histidine kinase domain is found at 254-474 (DAGHELRTPL…AMHVVLPGRP (221 aa)). Residue His-257 is modified to Phosphohistidine; by autocatalysis.

Mg(2+) serves as cofactor. Requires Mn(2+) as cofactor. In terms of processing, autophosphorylated.

The protein localises to the cell membrane. It carries out the reaction ATP + protein L-histidine = ADP + protein N-phospho-L-histidine.. Its function is as follows. Member of the two-component regulatory system MprB/MprA which contributes to maintaining a balance among several systems involved in stress resistance and is required for establishment and maintenance of persistent infection in the host. In response to environmental signals MprB acts both as a membrane-associated protein kinase that undergoes autophosphorylation and subsequently transfers the phosphate to MprA, and a protein phosphatase that dephosphorylates phospho-MprA. The polypeptide is Signal transduction histidine-protein kinase/phosphatase MprB (mprB) (Mycolicibacterium vanbaalenii (strain DSM 7251 / JCM 13017 / BCRC 16820 / KCTC 9966 / NRRL B-24157 / PYR-1) (Mycobacterium vanbaalenii)).